Reading from the N-terminus, the 427-residue chain is Trigger factor (427 aa).

Residues 160–240 (TDTVIGDVVK…VKEVKRLELP (81 aa)) form the PPIase FKBP-type domain.

It belongs to the FKBP-type PPIase family. Tig subfamily.

The protein resides in the cytoplasm. The catalysed reaction is [protein]-peptidylproline (omega=180) = [protein]-peptidylproline (omega=0). In terms of biological role, involved in protein export. Acts as a chaperone by maintaining the newly synthesized protein in an open conformation. Functions as a peptidyl-prolyl cis-trans isomerase. This chain is Trigger factor, found in Chlorobium limicola (strain DSM 245 / NBRC 103803 / 6330).